We begin with the raw amino-acid sequence, 78 residues long: Large ribosomal subunit protein bL28 (78 aa).

The protein belongs to the bacterial ribosomal protein bL28 family.

The polypeptide is Large ribosomal subunit protein bL28 (Prochlorococcus marinus (strain MIT 9211)).